A 91-amino-acid chain; its full sequence is N(2)-fixation sustaining protein CowN (91 aa).

This sequence belongs to the CowN family.

Functionally, is required to sustain N(2)-dependent growth in the presence of low levels of carbon monoxide (CO). Probably acts by protecting the N(2) fixation ability of the nitrogenase complex, which is inactivated in the presence of CO. The chain is N(2)-fixation sustaining protein CowN from Beijerinckia indica subsp. indica (strain ATCC 9039 / DSM 1715 / NCIMB 8712).